Consider the following 306-residue polypeptide: Ciliary microtubule inner protein 2B (306 aa).

Residues 61-92 (QSNPFPPPRDHSFDGGSQELGGRRQHPGDPNL) are disordered.

It belongs to the CIMIP2 family. In terms of tissue distribution, expressed in airway epithelial cells.

Its subcellular location is the cytoplasm. The protein resides in the cytoskeleton. It localises to the cilium axoneme. Functionally, microtubule inner protein (MIP) part of the dynein-decorated doublet microtubules (DMTs) in cilia axoneme, which is required for motile cilia beating. The polypeptide is Ciliary microtubule inner protein 2B (cimip2b) (Xenopus tropicalis (Western clawed frog)).